A 459-amino-acid chain; its full sequence is Interleukin-1 receptor-associated kinase 4 (459 aa).

The residue at position 1 (M1) is an N-acetylmethionine. A Death domain is found at 20–104 (RKLSDFIDPQ…APATLLLPDA (85 aa)). Residue K34 is modified to N6-acetyllysine. The tract at residues 115–161 (REAATVAQTHGPCQEKDRTSVMPMPKLEHSCEPPDSSSPDNRSVESS) is disordered. The 269-residue stretch at 186-454 (SAGGNRMGEG…PDIAKVQQLL (269 aa)) folds into the Protein kinase domain. Residues 192-200 (MGEGGFGVV) and K213 each bind ATP. The active-site Proton acceptor is the D311. ATP-binding positions include 313-316 (KSAN) and D329. A phosphothreonine mark is found at T342 and T345. S346 is modified (phosphoserine).

Belongs to the protein kinase superfamily. TKL Ser/Thr protein kinase family. Pelle subfamily. In terms of assembly, associates with MYD88 and IRAK2 to form a ternary complex called the Myddosome. Once phosphorylated, IRAK4 dissociates from the receptor complex and then associates with the TNF receptor-associated factor 6 (TRAF6), IRAK1, and PELI1; this intermediate complex is required for subsequent NF-kappa-B activation. Direct binding of SMAD6 to PELI1 prevents complex formation and hence negatively regulates IL1R-TLR signaling and eventually NF-kappa-B-mediated gene expression. Interacts with IL1RL1. Interacts (when phosphorylated) with IRAK1. May interact (when phosphorylated) with IRAK3. It depends on Mg(2+) as a cofactor. Phosphorylated.

Its subcellular location is the cytoplasm. It catalyses the reaction L-seryl-[protein] + ATP = O-phospho-L-seryl-[protein] + ADP + H(+). The enzyme catalyses L-threonyl-[protein] + ATP = O-phospho-L-threonyl-[protein] + ADP + H(+). Its function is as follows. Serine/threonine-protein kinase that plays a critical role in initiating innate immune response against foreign pathogens. Involved in Toll-like receptor (TLR) and IL-1R signaling pathways. Is rapidly recruited by MYD88 to the receptor-signaling complex upon TLR activation to form the Myddosome together with IRAK2. Phosphorylates initially IRAK1, thus stimulating the kinase activity and intensive autophosphorylation of IRAK1. Phosphorylates E3 ubiquitin ligases Pellino proteins (PELI1, PELI2 and PELI3) to promote pellino-mediated polyubiquitination of IRAK1. Then, the ubiquitin-binding domain of IKBKG/NEMO binds to polyubiquitinated IRAK1 bringing together the IRAK1-MAP3K7/TAK1-TRAF6 complex and the NEMO-IKKA-IKKB complex. In turn, MAP3K7/TAK1 activates IKKs (CHUK/IKKA and IKBKB/IKKB) leading to NF-kappa-B nuclear translocation and activation. Alternatively, phosphorylates TIRAP to promote its ubiquitination and subsequent degradation. Phosphorylates NCF1 and regulates NADPH oxidase activation after LPS stimulation suggesting a similar mechanism during microbial infections. This chain is Interleukin-1 receptor-associated kinase 4 (Irak4), found in Mus musculus (Mouse).